The primary structure comprises 382 residues: Gap junction alpha-1 protein (382 aa).

Topologically, residues glycine 2–lysine 23 are cytoplasmic. Phosphoserine is present on serine 5. The helical transmembrane segment at valine 24–alanine 44 threads the bilayer. At tryptophan 45–arginine 76 the chain is on the extracellular side. Cystine bridges form between cysteine 54/cysteine 192 and cysteine 187/cysteine 198. Residues phenylalanine 77–phenylalanine 97 traverse the membrane as a helical segment. Topologically, residues tyrosine 98 to tyrosine 155 are cytoplasmic. Lysine 144 is covalently cross-linked (Glycyl lysine isopeptide (Lys-Gly) (interchain with G-Cter in SUMO)). A helical transmembrane segment spans residues isoleucine 156 to isoleucine 176. At tyrosine 177–threonine 207 the chain is on the extracellular side. Residues isoleucine 208–leucine 228 traverse the membrane as a helical segment. The Cytoplasmic portion of the chain corresponds to phenylalanine 229–isoleucine 382. Lysine 237 is covalently cross-linked (Glycyl lysine isopeptide (Lys-Gly) (interchain with G-Cter in SUMO)). Residues serine 244–isoleucine 382 are interaction with NOV. A Phosphotyrosine modification is found at tyrosine 247. Phosphoserine occurs at positions 255, 257, and 262. The interval lysine 264 to isoleucine 382 is interaction with UBQLN4. An S-nitrosocysteine modification is found at cysteine 271. Phosphothreonine is present on threonine 275. Phosphoserine is present on residues serine 306 and serine 314. The segment covering glutamine 317–alanine 332 has biased composition (polar residues). The segment at glutamine 317–isoleucine 382 is disordered. Serine 325 is modified (phosphoserine; by CK1). Residue threonine 326 is modified to Phosphothreonine. Residues serine 328 and serine 330 each carry the phosphoserine; by CK1 modification. Residues serine 344 and serine 365 each carry the phosphoserine modification. The segment covering arginine 362–arginine 374 has biased composition (low complexity). Serine 368 is subject to Phosphoserine; by PKC/PRKCG and PKC/PRKCD. A phosphoserine mark is found at serine 369 and serine 373.

This sequence belongs to the connexin family. Alpha-type (group II) subfamily. A connexon is composed of a hexamer of connexins. Interacts with SGSM3. Interacts with RIC1/CIP150. Interacts with CNST and CSNK1D. Interacts (via C-terminus) with TJP1. Interacts (via C-terminus) with SRC (via SH3 domain). Interacts (not ubiquitinated) with UBQLN4 (via UBA domain). Interacts with NOV. Interacts with TMEM65. Interacts with ANK3/ANKG and PKP2. Post-translationally, phosphorylation at Ser-325, Ser-328 and Ser-330 by CK1 modulates gap junction assembly. Phosphorylated at Ser-368 by PRKCG; phosphorylation induces disassembly of gap junction plaques and inhibition of gap junction activity. Phosphorylation at Ser-368 by PRKCD triggers its internalization into small vesicles leading to proteasome-mediated degradation. Sumoylated with SUMO1, SUMO2 and SUMO3, which may regulate the level of functional Cx43 gap junctions at the plasma membrane. May be desumoylated by SENP1 or SENP2. In terms of processing, S-nitrosylation at Cys-271 is enriched at the muscle endothelial gap junction in arteries, it augments channel permeability and may regulate of smooth muscle cell to endothelial cell communication. Post-translationally, acetylated in the developing cortex; leading to delocalization from the cell membrane.

Its subcellular location is the cell membrane. The protein localises to the cell junction. It localises to the gap junction. The protein resides in the endoplasmic reticulum. Its function is as follows. Gap junction protein that acts as a regulator of bladder capacity. A gap junction consists of a cluster of closely packed pairs of transmembrane channels, the connexons, through which materials of low MW diffuse from one cell to a neighboring cell. May play a critical role in the physiology of hearing by participating in the recycling of potassium to the cochlear endolymph. Negative regulator of bladder functional capacity: acts by enhancing intercellular electrical and chemical transmission, thus sensitizing bladder muscles to cholinergic neural stimuli and causing them to contract. May play a role in cell growth inhibition through the regulation of NOV expression and localization. Plays an essential role in gap junction communication in the ventricles. The protein is Gap junction alpha-1 protein (GJA1) of Ursus americanus (American black bear).